Consider the following 139-residue polypeptide: Large ribosomal subunit protein bL21 (139 aa).

Belongs to the bacterial ribosomal protein bL21 family. In terms of assembly, part of the 50S ribosomal subunit. Contacts protein L20.

Its function is as follows. This protein binds to 23S rRNA in the presence of protein L20. The protein is Large ribosomal subunit protein bL21 of Prochlorococcus marinus (strain NATL1A).